Consider the following 424-residue polypeptide: MTNKKAFKEACKFIAGGVNSPVRAFANVQSEPKFISHGKGAYIFDIDGNSYIDYVQSWGPLLFGHCDKDIQKACQKALHKGSSFGAPTLLETELAKLVLSDFPHLEKIRFVSSGTEATMSAIRLARGFTKKDKILKFEGCYHGHSDSLLVSAGSGAATFNSPSSLGVLEDVAKHTLVAKYNDINSVKELFEKNKDIACVIIEPIAGNMGLVPAKQDFLEELAKICKNNQTLLIFDEVMSGYRASYLGSYGINHIQADIITFGKVIGGGLPAAAFASRAEIMDILSPLGGVYQAGTLSGNPLAMAAGIASLTKAKKKTKLYNKLGKLAKKLTQGMKKLADEKGLPLQACHVGSMFGYFFTKDPVSNYQDALKSDLALFSKFHKNMLENGIYLAPSQFETGFICSKMDDKIIDTTLEAVRESFKRI.

K263 bears the N6-(pyridoxal phosphate)lysine mark.

The protein belongs to the class-III pyridoxal-phosphate-dependent aminotransferase family. HemL subfamily. As to quaternary structure, homodimer. It depends on pyridoxal 5'-phosphate as a cofactor.

The protein resides in the cytoplasm. The enzyme catalyses (S)-4-amino-5-oxopentanoate = 5-aminolevulinate. It functions in the pathway porphyrin-containing compound metabolism; protoporphyrin-IX biosynthesis; 5-aminolevulinate from L-glutamyl-tRNA(Glu): step 2/2. The chain is Glutamate-1-semialdehyde 2,1-aminomutase from Campylobacter jejuni subsp. jejuni serotype O:23/36 (strain 81-176).